We begin with the raw amino-acid sequence, 436 residues long: Tryptophan synthase beta chain (436 aa).

Lysine 129 carries the N6-(pyridoxal phosphate)lysine modification.

It belongs to the TrpB family. Tetramer of two alpha and two beta chains. Pyridoxal 5'-phosphate is required as a cofactor.

The catalysed reaction is (1S,2R)-1-C-(indol-3-yl)glycerol 3-phosphate + L-serine = D-glyceraldehyde 3-phosphate + L-tryptophan + H2O. It participates in amino-acid biosynthesis; L-tryptophan biosynthesis; L-tryptophan from chorismate: step 5/5. The beta subunit is responsible for the synthesis of L-tryptophan from indole and L-serine. The polypeptide is Tryptophan synthase beta chain (Prochlorococcus marinus (strain MIT 9313)).